The chain runs to 167 residues: Small ribosomal subunit protein uS5 (167 aa).

Positions L12–V75 constitute an S5 DRBM domain.

Belongs to the universal ribosomal protein uS5 family. As to quaternary structure, part of the 30S ribosomal subunit. Contacts proteins S4 and S8.

In terms of biological role, with S4 and S12 plays an important role in translational accuracy. Located at the back of the 30S subunit body where it stabilizes the conformation of the head with respect to the body. The sequence is that of Small ribosomal subunit protein uS5 from Shewanella loihica (strain ATCC BAA-1088 / PV-4).